A 262-amino-acid polypeptide reads, in one-letter code: tRNA pseudouridine synthase A (262 aa).

Aspartate 54 functions as the Nucleophile in the catalytic mechanism. Residue tyrosine 113 participates in substrate binding.

This sequence belongs to the tRNA pseudouridine synthase TruA family. As to quaternary structure, homodimer.

The catalysed reaction is uridine(38/39/40) in tRNA = pseudouridine(38/39/40) in tRNA. In terms of biological role, formation of pseudouridine at positions 38, 39 and 40 in the anticodon stem and loop of transfer RNAs. This is tRNA pseudouridine synthase A from Lactobacillus acidophilus (strain ATCC 700396 / NCK56 / N2 / NCFM).